We begin with the raw amino-acid sequence, 37 residues long: Large ribosomal subunit protein bL36 (37 aa).

This sequence belongs to the bacterial ribosomal protein bL36 family.

The sequence is that of Large ribosomal subunit protein bL36 from Nitratiruptor sp. (strain SB155-2).